Here is a 164-residue protein sequence, read N- to C-terminus: MVDLNDKVIRGYLRSLVGDDGLKMIEQMPEGNVTDEEIAAKTGVLLNTVRRTLFILYENKFAIVVRERDSNSGWLTYLWHLDFSDIEHQLMREKKRLLRNLKTRLEFEENHVFYVCPQGCVRLLFDEATETEFLCPMCGEDLVYYDNSRFVGVLKKRVEALSSA.

The HTH TFE/IIEalpha-type domain occupies 5–87; that stretch reads NDKVIRGYLR…LWHLDFSDIE (83 aa).

The protein belongs to the TFE family. Monomer. Interaction with RNA polymerase subunits RpoF and RpoE is necessary for Tfe stimulatory transcription activity. Able to interact with Tbp and RNA polymerase in the absence of DNA promoter. Interacts both with the preinitiation and elongation complexes.

Functionally, transcription factor that plays a role in the activation of archaeal genes transcribed by RNA polymerase. Facilitates transcription initiation by enhancing TATA-box recognition by TATA-box-binding protein (Tbp), and transcription factor B (Tfb) and RNA polymerase recruitment. Not absolutely required for transcription in vitro, but particularly important in cases where Tbp or Tfb function is not optimal. It dynamically alters the nucleic acid-binding properties of RNA polymerases by stabilizing the initiation complex and destabilizing elongation complexes. Seems to translocate with the RNA polymerase following initiation and acts by binding to the non template strand of the transcription bubble in elongation complexes. This is Transcription factor E from Methanosarcina mazei (strain ATCC BAA-159 / DSM 3647 / Goe1 / Go1 / JCM 11833 / OCM 88) (Methanosarcina frisia).